A 364-amino-acid chain; its full sequence is Aminomethyltransferase (364 aa).

The protein belongs to the GcvT family. In terms of assembly, the glycine cleavage system is composed of four proteins: P, T, L and H.

It carries out the reaction N(6)-[(R)-S(8)-aminomethyldihydrolipoyl]-L-lysyl-[protein] + (6S)-5,6,7,8-tetrahydrofolate = N(6)-[(R)-dihydrolipoyl]-L-lysyl-[protein] + (6R)-5,10-methylene-5,6,7,8-tetrahydrofolate + NH4(+). Its function is as follows. The glycine cleavage system catalyzes the degradation of glycine. In Geobacillus sp. (strain WCH70), this protein is Aminomethyltransferase.